A 461-amino-acid polypeptide reads, in one-letter code: Tumor necrosis factor receptor superfamily member 1A (461 aa).

The first 29 residues, 1-29 (MGLPIVPGLLLSLVLLALLMGIHPSGVTG), serve as a signal peptide directing secretion. Topologically, residues 30–211 (LVPSLGDREK…VTNPQDSGTA (182 aa)) are extracellular. 4 TNFR-Cys repeats span residues 43–82 (LCPQ…TVCE), 83–125 (VCDK…DTVC), 126–166 (GCKK…NTVC), and 167–196 (NCHA…KLCL). 12 disulfides stabilise this stretch: Cys-44–Cys-58, Cys-59–Cys-72, Cys-62–Cys-81, Cys-84–Cys-99, Cys-102–Cys-117, Cys-105–Cys-125, Cys-127–Cys-143, Cys-146–Cys-158, Cys-149–Cys-166, Cys-168–Cys-179, Cys-182–Cys-195, and Cys-185–Cys-191. Asn-54 is a glycosylation site (N-linked (GlcNAc...) asparagine). N-linked (GlcNAc...) asparagine glycosylation is present at Asn-151. Residue Asn-201 is glycosylated (N-linked (GlcNAc...) asparagine). Residues 212-234 (VLLPLVIFLGLCLLFFICISLLC) form a helical membrane-spanning segment. Residues 235–461 (RYPQWRPRVY…AHSSTTHLPR (227 aa)) are Cytoplasmic-facing. The interval 344–354 (VRKWEDVVAAQ) is N-SMase activation domain (NSD). The Death domain occupies 363–448 (PAMLYAVVDG…GCLENIRETL (86 aa)).

As to quaternary structure, binding of TNF to the extracellular domain leads to homotrimerization. The aggregated death domains provide a novel molecular interface that interacts specifically with the death domain of TRADD. Various TRADD-interacting proteins such as TRAFS, RIPK1 and possibly FADD, are recruited to the complex by their association with TRADD. This complex activates at least two distinct signaling cascades, apoptosis and NF-kappa-B signaling. Interacts with BAG4, BABAM2, FEM1B, GRB2, SQSTM1 and TRPC4AP. Interacts with DAB2IP. Interacts directly with NOL3 (via CARD domain); inhibits TNF-signaling pathway. Interacts with SH3RF2, TRADD and RIPK1. SH3RF2 facilitates the recruitment of RIPK1 and TRADD to TNFRSF1A in a TNF-alpha-dependent process. Interacts with PGLYRP1; this interaction is important for cell death induction. Interacts (via death domain) with MADD (via death domain).

The protein localises to the cell membrane. It localises to the golgi apparatus membrane. In terms of biological role, receptor for TNFSF2/TNF-alpha and homotrimeric TNFSF1/lymphotoxin-alpha. The adapter molecule FADD recruits caspase-8 to the activated receptor. The resulting death-inducing signaling complex (DISC) performs caspase-8 proteolytic activation which initiates the subsequent cascade of caspases (aspartate-specific cysteine proteases) mediating apoptosis. The chain is Tumor necrosis factor receptor superfamily member 1A (Tnfrsf1a) from Rattus norvegicus (Rat).